A 492-amino-acid polypeptide reads, in one-letter code: Adenosylhomocysteinase-like 2 (492 aa).

Positions 43 to 64 (FTGSSDEEDVSPKDNHQRNSAG) are disordered. Aspartate 192 and glutamate 217 together coordinate substrate. 218-220 (SVT) contributes to the NAD(+) binding site. Substrate contacts are provided by lysine 247 and aspartate 251. Residues 283–288 (GDVGKG), glutamate 304, 360–362 (MGH), asparagine 407, lysine 486, 486–490 (KANYY), and tyrosine 490 each bind NAD(+).

The protein belongs to the adenosylhomocysteinase family. NAD(+) serves as cofactor.

Functionally, might play a role in the regulation of methionine metabolism. The sequence is that of Adenosylhomocysteinase-like 2 from Drosophila melanogaster (Fruit fly).